Reading from the N-terminus, the 509-residue chain is Coiled-coil domain-containing protein 181 (509 aa).

The span at 60–82 shows a compositional bias: basic and acidic residues; that stretch reads EHTKQHSDPDKSLQDDVSPRRND. 2 disordered regions span residues 60-121 and 285-367; these read EHTK…EEDE and GEPL…EEKE. Residues 320-334 are compositionally biased toward polar residues; it reads RTQSARISPVTSTYC. Positions 335-375 form a coiled coil; that stretch reads LSPRQKELQKQLEQKREKLKREEEQRKIEEEKEKKRENDIV. Basic and acidic residues predominate over residues 338–367; sequence RQKELQKQLEQKREKLKREEEQRKIEEEKE.

It belongs to the CCDC181 family. Homodimer. Interacts with HOOK1. Interacts with HOOK2. Interacts with HOOK3.

Its subcellular location is the cytoplasm. It localises to the cytoskeleton. The protein resides in the cell projection. It is found in the cilium. The protein localises to the flagellum. Its function is as follows. Microtubule-binding protein that localizes to the microtubular manchette of elongating spermatids. The protein is Coiled-coil domain-containing protein 181 of Macaca fascicularis (Crab-eating macaque).